Reading from the N-terminus, the 1097-residue chain is DNA-directed RNA polymerase subunit beta (1097 aa).

Residues 1072-1097 form a disordered region; sequence QDVNPRRSTPSRPTYESLGVADYDED.

It belongs to the RNA polymerase beta chain family. In terms of assembly, in cyanobacteria the RNAP catalytic core is composed of 2 alpha, 1 beta, 1 beta', 1 gamma and 1 omega subunit. When a sigma factor is associated with the core the holoenzyme is formed, which can initiate transcription.

It catalyses the reaction RNA(n) + a ribonucleoside 5'-triphosphate = RNA(n+1) + diphosphate. DNA-dependent RNA polymerase catalyzes the transcription of DNA into RNA using the four ribonucleoside triphosphates as substrates. This is DNA-directed RNA polymerase subunit beta from Synechococcus sp. (strain CC9605).